A 379-amino-acid chain; its full sequence is Fimbrium subunit Fim1C (379 aa).

The signal sequence occupies residues 1–17; it reads MEVKSLLMVMATLTIAG. Cys-18 carries the N-palmitoyl cysteine lipid modification. Cys-18 is lipidated: S-diacylglycerol cysteine. Residues 18-45 constitute a propeptide that is removed on maturation; it reads CSQNEMTEMNPDTNRTIGLDVYTEVQTR.

It belongs to the bacteroidetes fimbrillin superfamily. Mfa-like family. In terms of assembly, may be part of the fimbrial tip.

Its subcellular location is the fimbrium. The protein resides in the cell outer membrane. Functionally, probably a component of the fimbrium tip. Fimbriae are filamentous appendages on the cell surface that mediate cell adhesion and biofilm formation. The sequence is that of Fimbrium subunit Fim1C (fim1C) from Phocaeicola vulgatus (strain ATCC 8482 / DSM 1447 / JCM 5826 / CCUG 4940 / NBRC 14291 / NCTC 11154) (Bacteroides vulgatus).